The primary structure comprises 923 residues: RNA polymerase-associated protein RapA (923 aa).

The Helicase ATP-binding domain occupies 162 to 332 (EVGNRVNPRV…FARLRLLDPE (171 aa)). 175 to 182 (DEVGLGKT) provides a ligand contact to ATP. A DEAH box motif is present at residues 278–281 (DEAH). In terms of domain architecture, Helicase C-terminal spans 443–597 (KIDWLIDFLK…TCPMGMALFS (155 aa)).

Belongs to the SNF2/RAD54 helicase family. RapA subfamily. In terms of assembly, interacts with the RNAP. Has a higher affinity for the core RNAP than for the holoenzyme. Its ATPase activity is stimulated by binding to RNAP.

Functionally, transcription regulator that activates transcription by stimulating RNA polymerase (RNAP) recycling in case of stress conditions such as supercoiled DNA or high salt concentrations. Probably acts by releasing the RNAP, when it is trapped or immobilized on tightly supercoiled DNA. Does not activate transcription on linear DNA. Probably not involved in DNA repair. This Haemophilus influenzae (strain ATCC 51907 / DSM 11121 / KW20 / Rd) protein is RNA polymerase-associated protein RapA.